We begin with the raw amino-acid sequence, 225 residues long: Golgi to ER traffic protein 1 (225 aa).

Residue Met1 is a topological domain, lumenal. A helical membrane pass occupies residues 2–21 (NWVIIAALFFVIINKLLQYT). The Cytoplasmic segment spans residues 22-107 (SRYQEAWINK…SQSKLFNRLK (86 aa)). A coiled-coil region spans residues 37 to 104 (DISSLSKEYS…AKDSQSKLFN (68 aa)). The helical transmembrane segment at 108 to 128 (LLTLTLPFMILKLWKGKFIVY) threads the bilayer. Over 129 to 172 (DIPTKDTFPVIVNGVLSQGLLYIPLLPINFLRGIDPNKHILVPG) the chain is Lumenal. Residues 173-189 (VSLGIWLMALTKTIDTV) form a helical membrane-spanning segment. At 190-225 (EFIVKQLVFQPVVSKQVKEKTKEKVVELKTTEAELD) the chain is on the cytoplasmic side.

The protein belongs to the WRB/GET1 family. Component of the Golgi to ER traffic (GET) complex, which is composed of GET1, GET2 and GET3. Within the complex, GET1 and GET2 form a heterotetramer which is stabilized by phosphatidylinositol binding and which binds to the GET3 homodimer.

It is found in the endoplasmic reticulum membrane. Its subcellular location is the golgi apparatus membrane. Required for the post-translational delivery of tail-anchored (TA) proteins to the endoplasmic reticulum. Together with GET2, acts as a membrane receptor for soluble GET3, which recognizes and selectively binds the transmembrane domain of TA proteins in the cytosol. The GET complex cooperates with the HDEL receptor ERD2 to mediate the ATP-dependent retrieval of resident ER proteins that contain a C-terminal H-D-E-L retention signal from the Golgi to the ER. This Vanderwaltozyma polyspora (strain ATCC 22028 / DSM 70294 / BCRC 21397 / CBS 2163 / NBRC 10782 / NRRL Y-8283 / UCD 57-17) (Kluyveromyces polysporus) protein is Golgi to ER traffic protein 1.